A 178-amino-acid chain; its full sequence is CASP-like protein 4D1 (178 aa).

At Ala-2 the chain carries N-acetylalanine. The Cytoplasmic segment spans residues 2–14 (APPPPAPPSVTLR). Residues 15–35 (TVLLLLRVLTAAFLLITVVLI) form a helical membrane-spanning segment. The Extracellular segment spans residues 36-60 (STNTVTLEISSTSIKLPFNDVYAYR). The chain crosses the membrane as a helical span at residues 61–81 (YMLSAAVIGLVYAVVQLFLTI). The Cytoplasmic portion of the chain corresponds to 82–97 (SQFATGKTHPLTYQFD). A helical membrane pass occupies residues 98 to 118 (FYGDKVISYLLATGSAAGFGV). The Extracellular segment spans residues 119–149 (SKDLKDTYIALIEFDSTDPVDKFFSKGYASA). A helical transmembrane segment spans residues 150-170 (SLLLFAFVSLAVLSVFSSLAL). The Cytoplasmic portion of the chain corresponds to 171–178 (SKRPVPVS).

Belongs to the Casparian strip membrane proteins (CASP) family. Homodimer and heterodimers. In terms of tissue distribution, expressed in the root epidermis.

The protein resides in the cell membrane. This is CASP-like protein 4D1 from Arabidopsis thaliana (Mouse-ear cress).